Reading from the N-terminus, the 332-residue chain is Ferredoxin--NADP reductase 2 (332 aa).

Residues glutamate 37, glutamine 45, tyrosine 50, valine 90, phenylalanine 124, aspartate 285, and threonine 326 each coordinate FAD.

The protein belongs to the ferredoxin--NADP reductase type 2 family. As to quaternary structure, homodimer. FAD serves as cofactor.

It catalyses the reaction 2 reduced [2Fe-2S]-[ferredoxin] + NADP(+) + H(+) = 2 oxidized [2Fe-2S]-[ferredoxin] + NADPH. This chain is Ferredoxin--NADP reductase 2 (yumC), found in Bacillus subtilis (strain 168).